The primary structure comprises 79 residues: Transcriptional regulator SplA (79 aa).

Its function is as follows. Regulator of the spore photoproduct lyase operon (splAB). The sequence is that of Transcriptional regulator SplA (splA) from Bacillus subtilis (strain 168).